Here is a 273-residue protein sequence, read N- to C-terminus: Formamidopyrimidine-DNA glycosylase (273 aa).

P2 serves as the catalytic Schiff-base intermediate with DNA. The active-site Proton donor is E3. Residue K59 is the Proton donor; for beta-elimination activity of the active site. DNA-binding residues include H92 and R111. The FPG-type zinc-finger motif lies at 239–273 (KVYGKTDEPCVVCGTPIEKIKLNGRGTHFCPNCQK). The active-site Proton donor; for delta-elimination activity is the R263.

The protein belongs to the FPG family. As to quaternary structure, monomer. Zn(2+) serves as cofactor.

It carries out the reaction Hydrolysis of DNA containing ring-opened 7-methylguanine residues, releasing 2,6-diamino-4-hydroxy-5-(N-methyl)formamidopyrimidine.. It catalyses the reaction 2'-deoxyribonucleotide-(2'-deoxyribose 5'-phosphate)-2'-deoxyribonucleotide-DNA = a 3'-end 2'-deoxyribonucleotide-(2,3-dehydro-2,3-deoxyribose 5'-phosphate)-DNA + a 5'-end 5'-phospho-2'-deoxyribonucleoside-DNA + H(+). In terms of biological role, involved in base excision repair of DNA damaged by oxidation or by mutagenic agents. Acts as a DNA glycosylase that recognizes and removes damaged bases. Has a preference for oxidized purines, such as 7,8-dihydro-8-oxoguanine (8-oxoG). Has AP (apurinic/apyrimidinic) lyase activity and introduces nicks in the DNA strand. Cleaves the DNA backbone by beta-delta elimination to generate a single-strand break at the site of the removed base with both 3'- and 5'-phosphates. In Listeria monocytogenes serovar 1/2a (strain ATCC BAA-679 / EGD-e), this protein is Formamidopyrimidine-DNA glycosylase.